The chain runs to 311 residues: Solute carrier family 25 member 48 (311 aa).

3 Solcar repeats span residues S3–F86, R101–W205, and P214–A301. The next 6 membrane-spanning stretches (helical) occupy residues F9 to V29, G61 to S81, L107 to I127, V189 to E209, C217 to M237, and I277 to Y295.

The protein belongs to the mitochondrial carrier (TC 2.A.29) family.

The protein localises to the mitochondrion inner membrane. The chain is Solute carrier family 25 member 48 (SLC25A48) from Homo sapiens (Human).